A 407-amino-acid polypeptide reads, in one-letter code: Probable tRNA sulfurtransferase (407 aa).

In terms of domain architecture, THUMP spans N61–V165. ATP is bound by residues M183–L184, H208–F209, R265, G287, and Q296.

The protein belongs to the ThiI family.

Its subcellular location is the cytoplasm. The catalysed reaction is [ThiI sulfur-carrier protein]-S-sulfanyl-L-cysteine + a uridine in tRNA + 2 reduced [2Fe-2S]-[ferredoxin] + ATP + H(+) = [ThiI sulfur-carrier protein]-L-cysteine + a 4-thiouridine in tRNA + 2 oxidized [2Fe-2S]-[ferredoxin] + AMP + diphosphate. The enzyme catalyses [ThiS sulfur-carrier protein]-C-terminal Gly-Gly-AMP + S-sulfanyl-L-cysteinyl-[cysteine desulfurase] + AH2 = [ThiS sulfur-carrier protein]-C-terminal-Gly-aminoethanethioate + L-cysteinyl-[cysteine desulfurase] + A + AMP + 2 H(+). The protein operates within cofactor biosynthesis; thiamine diphosphate biosynthesis. Functionally, catalyzes the ATP-dependent transfer of a sulfur to tRNA to produce 4-thiouridine in position 8 of tRNAs, which functions as a near-UV photosensor. Also catalyzes the transfer of sulfur to the sulfur carrier protein ThiS, forming ThiS-thiocarboxylate. This is a step in the synthesis of thiazole, in the thiamine biosynthesis pathway. The sulfur is donated as persulfide by IscS. The chain is Probable tRNA sulfurtransferase from Staphylococcus aureus (strain MSSA476).